We begin with the raw amino-acid sequence, 332 residues long: Ribosomal RNA small subunit methyltransferase C (332 aa).

The protein belongs to the methyltransferase superfamily. RsmC family. As to quaternary structure, monomer.

The protein resides in the cytoplasm. The catalysed reaction is guanosine(1207) in 16S rRNA + S-adenosyl-L-methionine = N(2)-methylguanosine(1207) in 16S rRNA + S-adenosyl-L-homocysteine + H(+). In terms of biological role, specifically methylates the guanine in position 1207 of 16S rRNA in the 30S particle. This Pseudomonas putida (strain ATCC 47054 / DSM 6125 / CFBP 8728 / NCIMB 11950 / KT2440) protein is Ribosomal RNA small subunit methyltransferase C.